The sequence spans 61 residues: Small ribosomal subunit protein uS14 (61 aa).

Residues C24, C27, C40, and C43 each contribute to the Zn(2+) site.

The protein belongs to the universal ribosomal protein uS14 family. Zinc-binding uS14 subfamily. Part of the 30S ribosomal subunit. Contacts proteins S3 and S10. Zn(2+) is required as a cofactor.

In terms of biological role, binds 16S rRNA, required for the assembly of 30S particles and may also be responsible for determining the conformation of the 16S rRNA at the A site. This chain is Small ribosomal subunit protein uS14, found in Geotalea daltonii (strain DSM 22248 / JCM 15807 / FRC-32) (Geobacter daltonii).